Consider the following 140-residue polypeptide: ATP synthase epsilon chain (140 aa).

The protein belongs to the ATPase epsilon chain family. In terms of assembly, F-type ATPases have 2 components, CF(1) - the catalytic core - and CF(0) - the membrane proton channel. CF(1) has five subunits: alpha(3), beta(3), gamma(1), delta(1), epsilon(1). CF(0) has three main subunits: a, b and c.

The protein resides in the cell inner membrane. Functionally, produces ATP from ADP in the presence of a proton gradient across the membrane. This chain is ATP synthase epsilon chain, found in Stenotrophomonas maltophilia (strain R551-3).